The following is a 138-amino-acid chain: Hexon-interlacing protein (138 aa).

A coiled-coil region spans residues 100–127 (LLVLLAQLEALTQRLGELSKQVAQLREQ).

It belongs to the adenoviridae hexon-interlacing protein family. As to quaternary structure, homotrimer. Interacts with hexon protein; this interaction tethers the hexons together. Self-interacts with adjacent proteins. Interacts with kinesin light chain KLC1; this interaction leads to capsid disruption at the nuclear pore complex during virus entry into host cell.

The protein localises to the virion. It localises to the host nucleus. Functionally, structural component of the virion that acts as a cement protein on the capsid exterior and forms triskelion structures consisting of three molecules that stabilize three hexon trimers at the center of each icosahedral facet and fixes the peripentonal hexons. Dispensable for assembly. During virus entry, recruits the anterograde motor kinesin-1 to the capsid docked at the nuclear pore complex thereby subjecting the docked capsid to a pulling force. The resulting tension leads to capsid disruption, dispersion of capsid fragments toward cell periphery and eventually viral DNA entry into the host nucleus. This is Hexon-interlacing protein from Human adenovirus B serotype 7 (HAdV-7).